Here is a 129-residue protein sequence, read N- to C-terminus: Follitropin subunit beta (129 aa).

The signal sequence occupies residues 1–20 (MKSVQFCFLFCCWRAICCRS). 6 disulfide bridges follow: cysteine 21–cysteine 69, cysteine 35–cysteine 84, cysteine 38–cysteine 122, cysteine 46–cysteine 100, cysteine 50–cysteine 102, and cysteine 105–cysteine 112. Residues asparagine 25 and asparagine 42 are each glycosylated (N-linked (GlcNAc...) asparagine).

The protein belongs to the glycoprotein hormones subunit beta family. In terms of assembly, heterodimer. The active follitropin is a heterodimer composed of an alpha chain/CGA shared with other hormones and a unique beta chain/FSHB shown here.

The protein localises to the secreted. Its function is as follows. Together with the alpha chain CGA constitutes follitropin, the follicle-stimulating hormone, and provides its biological specificity to the hormone heterodimer. Binds FSHR, a G protein-coupled receptor, on target cells to activate downstream signaling pathways. Follitropin is involved in follicle development and spermatogenesis in reproductive organs. This chain is Follitropin subunit beta (FSHB), found in Bos taurus (Bovine).